The chain runs to 1310 residues: PAN2-PAN3 deadenylation complex catalytic subunit pan2 (1310 aa).

4 WD repeats span residues 22–61, 67–105, 106–144, and 145–184; these read YHAG…RFTA, ETDG…SIRH, ESMQ…GEVV, and KELP…IKKQ. The interval 318–463 is linker; that stretch reads QFTEIGIPPR…NNDHWSLRPE (146 aa). In terms of domain architecture, USP spans 463 to 850; sequence EAPPEYRICE…MPVVVMFQVK (388 aa). 8 residues coordinate Zn(2+): His-525, Cys-530, Cys-535, Cys-538, Cys-645, Cys-648, Cys-700, and Cys-703. Residues 897-1070 enclose the Exonuclease domain; sequence IAIDTEFIRL…EDAQTALKLY (174 aa). A divalent metal cation contacts are provided by Asp-900, Glu-902, Asp-1009, and Asp-1062. The disordered stretch occupies residues 1121–1169; that stretch reads TPPVPAPGTTEGSFEISNSSTATTGGSALSATGGMGSASASSSMPSTPV. Low complexity predominate over residues 1139-1168; that stretch reads SSTATTGGSALSATGGMGSASASSSMPSTP.

It belongs to the peptidase C19 family. PAN2 subfamily. In terms of assembly, forms a heterotrimer with an asymmetric homodimer of the regulatory subunit par-2/pan3 to form the poly(A)-nuclease (PAN) deadenylation complex. A divalent metal cation serves as cofactor.

It is found in the cytoplasm. The enzyme catalyses Exonucleolytic cleavage of poly(A) to 5'-AMP.. Its activity is regulated as follows. Positively regulated by the regulatory subunit par-2/pan3. Functionally, catalytic subunit of the poly(A)-nuclease (PAN) deadenylation complex, one of two cytoplasmic mRNA deadenylases involved in mRNA turnover. PAN specifically shortens poly(A) tails of RNA and the activity is stimulated by poly(A)-binding protein pabp-1. PAN deadenylation is followed by rapid degradation of the shortened mRNA tails by the CCR4-NOT complex. Deadenylated mRNAs are then degraded by two alternative mechanisms, namely exosome-mediated 3'-5' exonucleolytic degradation, or deadenylation-dependent mRNA decaping and subsequent 5'-3' exonucleolytic degradation by rgb-30/xrn1. May also be involved in post-transcriptional maturation of mRNA poly(A) tails. In Neurospora crassa (strain ATCC 24698 / 74-OR23-1A / CBS 708.71 / DSM 1257 / FGSC 987), this protein is PAN2-PAN3 deadenylation complex catalytic subunit pan2 (par-1).